Consider the following 641-residue polypeptide: Epithelial sodium channel subunit beta (641 aa).

Residues 1 to 50 are Cytoplasmic-facing; it reads MHLKKYLLKGLHRLQKGPGYSYKELLVWYCNNTNTHGPKRIICEGPKKKA. A helical transmembrane segment spans residues 51–71; it reads MWFLITLLFTSLVCWQWGVFI. Residues 72 to 533 are Extracellular-facing; that stretch reads RTYLSWEVSV…GGQFGFWMGG (462 aa). Intrachain disulfides connect C98/C273, C185/C190, C197/C204, C250/C257, C362/C449, C387/C445, C391/C441, C400/C427, and C402/C416. N-linked (GlcNAc...) asparagine glycosylation is present at N141. N261 carries an N-linked (GlcNAc...) asparagine glycan. A helical membrane pass occupies residues 534-554; it reads SVLCLIEFGEILIDFVWITII. Topologically, residues 555 to 641 are cytoplasmic; it reads KLVAFAKSLR…IESDSEGDAI (87 aa). Residues 593–624 form a disordered region; that stretch reads PDVARPGPDPGTYPDEQTLPIPGTPPPNYDSL. The PY motif; recruits WW domain-containing proteins and is thereby required for ubiquitination and inhibition of the channel by NEDD4 and NEDD4L motif lies at 617–621; it reads PPPNY. Phosphoserine is present on residues S634 and S636.

The protein belongs to the amiloride-sensitive sodium channel (TC 1.A.6) family. SCNN1B subfamily. Component of the heterotrimeric epithelial sodium channel (ENaC) composed of an alpha/SCNN1A, a beta/SCNN1B and a gamma/SCNN1G subunit. An additional delta/SCNN1D subunit can replace the alpha/SCNN1A subunit to form an alternative channel with specific properties. Interacts with WWP1 (via WW domains). Interacts with WWP2 (via WW domains); inhibits the channel. Interacts with the full-length immature form of PCSK9 (pro-PCSK9). Interacts (N-glycosylated) with BPIFA1; the interaction is direct and inhibits the proteolytic processing of SCNN1A and SCNN1G and the activation of ENaC. Post-translationally, ubiquitinated. Can be ubiquitinated at multiple sites and undergo monoubiquitination and polyubiquitination. Ubiquitination by NEDD4 or NEDD4L inhibits the ENaC channel through endocytosis, intracellular retention and degradation of its individual subunits. However, some studies could not confirm the ubiquitination of this subunit of the ENaC. In terms of processing, phosphorylated on serine and threonine residues. Aldosterone and insulin increase the basal level of phosphorylation. N-glycosylated. N-glycosylation is required for interaction with BPIFA1.

The protein localises to the apical cell membrane. It localises to the cytoplasmic vesicle membrane. It carries out the reaction Na(+)(in) = Na(+)(out). With respect to regulation, originally identified and characterized by its inhibition by the diuretic drug amiloride. Its function is as follows. This is one of the three pore-forming subunits of the heterotrimeric epithelial sodium channel (ENaC), a critical regulator of sodium balance and fluid homeostasis. ENaC operates in epithelial tissues, where it mediates the electrodiffusion of sodium ions from extracellular fluid through the apical membrane of cells, with water following osmotically. It plays a key role in maintaining sodium homeostasis through electrogenic sodium reabsorption in the kidneys. Additionally, ENaC is essential for airway surface liquid homeostasis, which is crucial for proper mucus clearance. The polypeptide is Epithelial sodium channel subunit beta (Canis lupus familiaris (Dog)).